We begin with the raw amino-acid sequence, 383 residues long: Inactive serine protease 54 (383 aa).

The N-terminal stretch at 1–20 (MAEMRGMLLMLLYISHSSSA) is a signal peptide. A Peptidase S1 domain is found at 21–258 (ICGIQKATIA…YSDWITAKTR (238 aa)). N-linked (GlcNAc...) asparagine glycosylation is present at Asn-113. Cystine bridges form between Cys-154–Cys-216, Cys-185–Cys-195, and Cys-206–Cys-237. The interval 305-334 (QGQRMSTKSNKQKDAGQNFRVNRQPETSGP) is disordered. Positions 323–334 (FRVNRQPETSGP) are enriched in polar residues.

It belongs to the peptidase S1 family. Plasma kallikrein subfamily.

It is found in the secreted. The protein is Inactive serine protease 54 (Prss54) of Mus musculus (Mouse).